A 484-amino-acid chain; its full sequence is ATP-dependent rRNA helicase RRP3 (484 aa).

Low complexity-rich tracts occupy residues 1–14 (MPSP…SMSQ) and 22–34 (PSPA…APEA). The tract at residues 1-38 (MPSPSPEASSSMSQPGPPSRSPSPASSNPDAPEASHNK) is disordered. The short motif at 38-66 (KTFADLGISPELCRACASMGFKKPSDIQA) is the Q motif element. A Helicase ATP-binding domain is found at 69–240 (IPHALEGKDI…RASLNKPVRV (172 aa)). ATP is bound at residue 82–89 (AQTGSGKT). The short motif at 188–191 (DEAD) is the DEAD box element. Residues 263-411 (NKDAYLLYLA…SFDVDKEAVA (149 aa)) form the Helicase C-terminal domain. Residues 425 to 484 (ALEMRESGTGGGGGKRGRDKGKRKTFGDGDDRDRDDDVVEAGVPRKKNKFTPGGKKKARK) are disordered. Basic residues-rich tracts occupy residues 439 to 448 (KRGRDKGKRK) and 468 to 484 (PRKK…KARK).

The protein belongs to the DEAD box helicase family. DDX47/RRP3 subfamily. Interacts with the SSU processome.

It localises to the nucleus. It carries out the reaction ATP + H2O = ADP + phosphate + H(+). ATP-dependent rRNA helicase required for pre-ribosomal RNA processing. Involved in the maturation of the 35S-pre-rRNA and to its cleavage to mature 18S rRNA. The protein is ATP-dependent rRNA helicase RRP3 of Cryptococcus neoformans var. neoformans serotype D (strain B-3501A) (Filobasidiella neoformans).